A 396-amino-acid polypeptide reads, in one-letter code: Phosphoglycerate kinase (396 aa).

Residues 21 to 23 (DFN), arginine 36, 59 to 62 (HLGK), arginine 119, and arginine 156 contribute to the substrate site. Residues lysine 206, glutamate 325, and 352–355 (GGDS) contribute to the ATP site.

It belongs to the phosphoglycerate kinase family. Monomer.

It localises to the cytoplasm. It carries out the reaction (2R)-3-phosphoglycerate + ATP = (2R)-3-phospho-glyceroyl phosphate + ADP. Its pathway is carbohydrate degradation; glycolysis; pyruvate from D-glyceraldehyde 3-phosphate: step 2/5. The sequence is that of Phosphoglycerate kinase from Staphylococcus haemolyticus (strain JCSC1435).